The following is a 334-amino-acid chain: BTB and MATH domain-containing protein 39 (334 aa).

The region spanning 14-141 is the MATH domain; the sequence is IVTLVFNIYN…EGRFQIEFDL (128 aa). The BTB domain occupies 164-229; the sequence is ADGELITDGK…LQLDSFEVSV (66 aa).

The polypeptide is BTB and MATH domain-containing protein 39 (bath-39) (Caenorhabditis elegans).